Here is a 45-residue protein sequence, read N- to C-terminus: Large ribosomal subunit protein bL34 (45 aa).

The protein belongs to the bacterial ribosomal protein bL34 family.

The polypeptide is Large ribosomal subunit protein bL34 (rpmH) (Streptomyces coelicolor (strain ATCC BAA-471 / A3(2) / M145)).